The primary structure comprises 249 residues: tRNA pseudouridine synthase A (249 aa).

The active-site Nucleophile is aspartate 52. Position 110 (tyrosine 110) interacts with substrate.

The protein belongs to the tRNA pseudouridine synthase TruA family. Homodimer.

The catalysed reaction is uridine(38/39/40) in tRNA = pseudouridine(38/39/40) in tRNA. Functionally, formation of pseudouridine at positions 38, 39 and 40 in the anticodon stem and loop of transfer RNAs. The sequence is that of tRNA pseudouridine synthase A from Exiguobacterium sibiricum (strain DSM 17290 / CCUG 55495 / CIP 109462 / JCM 13490 / 255-15).